We begin with the raw amino-acid sequence, 146 residues long: HTH-type transcriptional regulator FarR (146 aa).

The 133-residue stretch at 7-139 folds into the HTH marR-type domain; sequence HASINIGLIQ…LKDLLAELAK (133 aa). The segment at residues 53 to 76 is a DNA-binding region (H-T-H motif); the sequence is FQDLANQACILRPSLTGILTRLEK.

Repressor activity requires the presence of the Integration Host Factor (IHF), which binds to sequences located between FarR binding sites A and C. IHF binding to the promoter region stabilizes the binding of FarR to its binding sites A and C and as a consequence, enhances repression of the farAB operon. In terms of biological role, negatively controls expression of the farAB operon by binding directly to the farAB promoter region. Binds to three sites (sites A, B and C) within the DNA sequence upstream of farA. Also represses its own expression. This chain is HTH-type transcriptional regulator FarR, found in Neisseria gonorrhoeae.